A 354-amino-acid polypeptide reads, in one-letter code: Polyprenal reductase 1 (354 aa).

The next 6 membrane-spanning stretches (helical) occupy residues 11 to 31 (PLLC…ALPI), 78 to 98 (FMHF…AIWF), 141 to 158 (YHVW…IQVL), 176 to 196 (MHIV…LSLA), 235 to 255 (PLLK…WGSL), and 301 to 321 (GMLV…VFVI).

This sequence belongs to the steroid 5-alpha reductase family. Polyprenal reductase subfamily.

The protein resides in the cell membrane. It carries out the reaction a di-trans,poly-cis-dolichal + NADP(+) = a di-trans,poly-cis-polyprenal + NADPH + H(+). It functions in the pathway protein modification; protein glycosylation. Plays a key role in early steps of protein N-linked glycosylation by being involved in the conversion of polyprenol into dolichol. Acts as a polyprenal reductase that mediates the reduction of polyprenal into dolichal in a NADP-dependent mechanism. Dolichols are required for the synthesis of dolichol-linked monosaccharides and the oligosaccharide precursor used for N-glycosylation. In Oryza sativa subsp. indica (Rice), this protein is Polyprenal reductase 1.